Here is a 225-residue protein sequence, read N- to C-terminus: PKHD-type hydroxylase YbiX (225 aa).

Residues 78–177 (TLSTPLFNRY…RVASFMWIQS (100 aa)) enclose the Fe2OG dioxygenase domain. 3 residues coordinate Fe cation: His-96, Asp-98, and His-158. Arg-168 is a 2-oxoglutarate binding site.

It depends on Fe(2+) as a cofactor. L-ascorbate is required as a cofactor.

The chain is PKHD-type hydroxylase YbiX from Escherichia coli O7:K1 (strain IAI39 / ExPEC).